The following is a 734-amino-acid chain: Photosystem I P700 chlorophyll a apoprotein A2 (734 aa).

The next 8 membrane-spanning stretches (helical) occupy residues 46–69 (IFAS…FHVA), 135–158 (LYTG…LHLQ), 175–199 (LNHH…HVAI), 273–291 (MAHH…GHMY), 330–353 (LHFQ…QHMY), 369–395 (AALY…IFFL), 417–439 (AIIS…LYVH), and 517–535 (FLVH…LILV). [4Fe-4S] cluster-binding residues include C559 and C568. Helical transmembrane passes span 575-596 (AFYL…YWHW) and 643-665 (LSVW…MFLI). H654, M662, and Y670 together coordinate chlorophyll a. Position 671 (W671) interacts with phylloquinone. The helical transmembrane segment at 707-727 (LVGLAHFSVGYIFTYAAFLIA) threads the bilayer.

It belongs to the PsaA/PsaB family. The PsaA/B heterodimer binds the P700 chlorophyll special pair and subsequent electron acceptors. PSI consists of a core antenna complex that captures photons, and an electron transfer chain that converts photonic excitation into a charge separation. The eukaryotic PSI reaction center is composed of at least 11 subunits. The cofactor is P700 is a chlorophyll a/chlorophyll a' dimer, A0 is one or more chlorophyll a, A1 is one or both phylloquinones and FX is a shared 4Fe-4S iron-sulfur center..

It localises to the plastid. The protein resides in the chloroplast thylakoid membrane. It carries out the reaction reduced [plastocyanin] + hnu + oxidized [2Fe-2S]-[ferredoxin] = oxidized [plastocyanin] + reduced [2Fe-2S]-[ferredoxin]. Its function is as follows. PsaA and PsaB bind P700, the primary electron donor of photosystem I (PSI), as well as the electron acceptors A0, A1 and FX. PSI is a plastocyanin-ferredoxin oxidoreductase, converting photonic excitation into a charge separation, which transfers an electron from the donor P700 chlorophyll pair to the spectroscopically characterized acceptors A0, A1, FX, FA and FB in turn. Oxidized P700 is reduced on the lumenal side of the thylakoid membrane by plastocyanin. The chain is Photosystem I P700 chlorophyll a apoprotein A2 from Adiantum capillus-veneris (Maidenhair fern).